The primary structure comprises 241 residues: Regulatory protein VirG (241 aa).

The Response regulatory domain maps to 3–117 (HVLVIDDDVA…EFLARIRVAL (115 aa)). Asp52 carries the post-translational modification 4-aspartylphosphate. The segment at residues 129–229 (RRSFYFADWT…ARGAGYFFDA (101 aa)) is a DNA-binding region (ompR/PhoB-type).

In terms of processing, phosphorylated by wide host range (WHR) VirA protein.

The protein resides in the cytoplasm. Its function is as follows. VirG is required for the positive regulation of at least two vir loci encoded by the Ri plasmid of A.rhizogenes. In Rhizobium rhizogenes (Agrobacterium rhizogenes), this protein is Regulatory protein VirG (virG).